The sequence spans 108 residues: Holo-[acyl-carrier-protein] synthase (108 aa).

2 residues coordinate Mg(2+): aspartate 9 and glutamate 54.

It belongs to the P-Pant transferase superfamily. AcpS family. Requires Mg(2+) as cofactor.

The protein resides in the cytoplasm. The enzyme catalyses apo-[ACP] + CoA = holo-[ACP] + adenosine 3',5'-bisphosphate + H(+). In terms of biological role, transfers the 4'-phosphopantetheine moiety from coenzyme A to a Ser of acyl-carrier-protein. The sequence is that of Holo-[acyl-carrier-protein] synthase from Mycoplasmopsis pulmonis (strain UAB CTIP) (Mycoplasma pulmonis).